The following is a 307-amino-acid chain: Holliday junction branch migration complex subunit RuvB (307 aa).

The segment at 1–167 (MKLQIKPPNN…FGMILNIDYY (167 aa)) is large ATPase domain (RuvB-L). ATP contacts are provided by residues isoleucine 5, glycine 48, lysine 51, threonine 52, threonine 53, 114–116 (DDF), arginine 157, tyrosine 167, and arginine 204. Threonine 52 provides a ligand contact to Mg(2+). The interval 168-233 (SNQEIERIVS…DLAALFKSLM (66 aa)) is small ATPAse domain (RuvB-S). Residues 236-307 (KNGLQSIDVQ…RTGRNYLTSC (72 aa)) are head domain (RuvB-H). Lysine 289 and arginine 294 together coordinate DNA.

Belongs to the RuvB family. In terms of assembly, homohexamer. Forms an RuvA(8)-RuvB(12)-Holliday junction (HJ) complex. HJ DNA is sandwiched between 2 RuvA tetramers; dsDNA enters through RuvA and exits via RuvB. An RuvB hexamer assembles on each DNA strand where it exits the tetramer. Each RuvB hexamer is contacted by two RuvA subunits (via domain III) on 2 adjacent RuvB subunits; this complex drives branch migration. In the full resolvosome a probable DNA-RuvA(4)-RuvB(12)-RuvC(2) complex forms which resolves the HJ.

The protein resides in the cytoplasm. The catalysed reaction is ATP + H2O = ADP + phosphate + H(+). The RuvA-RuvB-RuvC complex processes Holliday junction (HJ) DNA during genetic recombination and DNA repair, while the RuvA-RuvB complex plays an important role in the rescue of blocked DNA replication forks via replication fork reversal (RFR). RuvA specifically binds to HJ cruciform DNA, conferring on it an open structure. The RuvB hexamer acts as an ATP-dependent pump, pulling dsDNA into and through the RuvAB complex. RuvB forms 2 homohexamers on either side of HJ DNA bound by 1 or 2 RuvA tetramers; 4 subunits per hexamer contact DNA at a time. Coordinated motions by a converter formed by DNA-disengaged RuvB subunits stimulates ATP hydrolysis and nucleotide exchange. Immobilization of the converter enables RuvB to convert the ATP-contained energy into a lever motion, pulling 2 nucleotides of DNA out of the RuvA tetramer per ATP hydrolyzed, thus driving DNA branch migration. The RuvB motors rotate together with the DNA substrate, which together with the progressing nucleotide cycle form the mechanistic basis for DNA recombination by continuous HJ branch migration. Branch migration allows RuvC to scan DNA until it finds its consensus sequence, where it cleaves and resolves cruciform DNA. This is Holliday junction branch migration complex subunit RuvB from Mycoplasma pneumoniae (strain ATCC 29342 / M129 / Subtype 1) (Mycoplasmoides pneumoniae).